The following is a 457-amino-acid chain: MDSFKVVLEGPAPWGFRLQGGKDFNVPLSISRLTPGGKAAQAGVAVGDWVLSIDGENAGSLTHIEAQNKIRACGERLSLGLSRAQPAQSKPQKALTPPADPPRYTFAPSASLNKTARPFGAPPPTDSALSQNGQLLRQLVPDASKQRLMENTEDWRPRPGTGQSRSFRILAHLTGTEFMQDPDEEFMKKSSQVPRTEAPAPASTIPQESWPGPTTPSPTSRPPWAVDPAFAERYAPDKTSTVLTRHSQPATPTPLQNRTSIVQAAAGGGTGGGSNNGKTPVCHQCHKIIRGRYLVALGHAYHPEEFVCSQCGKVLEEGGFFEEKGAIFCPSCYDVRYAPSCAKCKKKITGEIMHALKMTWHVPCFTCAACKTPIRNRAFYMEEGAPYCERDYEKMFGTKCRGCDFKIDAGDRFLEALGFSWHDTCFVCAICQINLEGKTFYSKKDKPLCKSHAFSHV.

Residues 1–85 (MDSFKVVLEG…RLSLGLSRAQ (85 aa)) enclose the PDZ domain. At Ser78 the chain carries Phosphoserine. Disordered stretches follow at residues 81–132 (LSRA…LSQN) and 186–226 (FMKK…PWAV). Thr96 carries the post-translational modification Phosphothreonine. Arg103 is subject to Asymmetric dimethylarginine. Phosphoserine is present on Ser111. The residue at position 247 (Ser247) is a Phosphoserine. 3 LIM zinc-binding domains span residues 280–338 (PVCH…VRYA), 339–398 (PSCA…MFGT), and 399–457 (KCRG…FSHV).

In terms of assembly, binds via its LIM zinc-binding 3 domain (LIM 3) domain to endocytic codes of INSR, but not with those of IGF1R, LDLR, TFRC, or EGFR. Interacts with various PKC isoforms through the LIM zinc-binding domains. Binds to RET in a phosphorylation-independent manner via its LIM zinc-binding 2 domain (LIM 2). Probably part of a complex with SHC and the RET dimer. Interacts with TPM2, TBX4 and TBX5. Interacts (via LIM domains) with SIPA1L1. As to expression, expressed in kidney, heart, brain, lung, and skeletal muscle. Overexpression results in the synthesis of an unidentified soluble factor which acts on cells in the osteoblast lineage causing them to differentiate and secrete BMP-2.

It localises to the cytoplasm. The protein localises to the cytoskeleton. May function as a scaffold on which the coordinated assembly of proteins can occur. May play a role as an adapter that, via its PDZ domain, localizes LIM-binding proteins to actin filaments of both skeletal muscle and nonmuscle tissues. Involved in both of the two fundamental mechanisms of bone formation, direct bone formation (e.g. embryonic flat bones mandible and cranium), and endochondral bone formation (e.g. embryonic long bone development). Plays a role during fracture repair. Involved in BMP6 signaling pathway. The sequence is that of PDZ and LIM domain protein 7 (Pdlim7) from Rattus norvegicus (Rat).